We begin with the raw amino-acid sequence, 450 residues long: Zinc metalloproteinase nas-13 (450 aa).

Positions 1-31 (MPSPTSSSASVFSSHLFFVFCIFSQIAQSYA) are cleaved as a signal peptide. Asn68 is a glycosylation site (N-linked (GlcNAc...) asparagine). Residues 110 to 303 (NAVRQTYLKW…YKINMLYNCP (194 aa)) form the Peptidase M12A domain. Intrachain disulfides connect Cys152-Cys302 and Cys174-Cys193. His201 is a Zn(2+) binding site. Residue Glu202 is part of the active site. His205 and His211 together coordinate Zn(2+). Asn225 carries an N-linked (GlcNAc...) asparagine glycan. Positions 349–351 (RGD) match the Cell attachment site motif. Intrachain disulfides connect Cys368-Cys404, Cys375-Cys397, Cys384-Cys401, Cys414-Cys450, Cys421-Cys443, and Cys430-Cys447. ShKT domains follow at residues 368-404 (CEDR…CGKC) and 414-450 (CEDA…CNFC). N-linked (GlcNAc...) asparagine glycosylation is present at Asn431.

It depends on Zn(2+) as a cofactor.

The protein localises to the secreted. Metalloprotease. The protein is Zinc metalloproteinase nas-13 (nas-13) of Caenorhabditis elegans.